The primary structure comprises 451 residues: 3-phosphoshikimate 1-carboxyvinyltransferase (451 aa).

3-phosphoshikimate-binding residues include K30, S31, and R35. K30 is a binding site for phosphoenolpyruvate. Phosphoenolpyruvate-binding residues include G103 and R131. 3-phosphoshikimate-binding residues include S176, Q178, D329, and K356. Position 178 (Q178) interacts with phosphoenolpyruvate. The active-site Proton acceptor is D329. Phosphoenolpyruvate-binding residues include R360 and R404.

It belongs to the EPSP synthase family. In terms of assembly, monomer.

The protein localises to the cytoplasm. It catalyses the reaction 3-phosphoshikimate + phosphoenolpyruvate = 5-O-(1-carboxyvinyl)-3-phosphoshikimate + phosphate. The protein operates within metabolic intermediate biosynthesis; chorismate biosynthesis; chorismate from D-erythrose 4-phosphate and phosphoenolpyruvate: step 6/7. Catalyzes the transfer of the enolpyruvyl moiety of phosphoenolpyruvate (PEP) to the 5-hydroxyl of shikimate-3-phosphate (S3P) to produce enolpyruvyl shikimate-3-phosphate and inorganic phosphate. This chain is 3-phosphoshikimate 1-carboxyvinyltransferase, found in Parvibaculum lavamentivorans (strain DS-1 / DSM 13023 / NCIMB 13966).